The chain runs to 268 residues: Putative pyruvate, phosphate dikinase regulatory protein (268 aa).

Residue 147–154 (GLSRTSKT) coordinates ADP.

Belongs to the pyruvate, phosphate/water dikinase regulatory protein family. PDRP subfamily.

It carries out the reaction N(tele)-phospho-L-histidyl/L-threonyl-[pyruvate, phosphate dikinase] + ADP = N(tele)-phospho-L-histidyl/O-phospho-L-threonyl-[pyruvate, phosphate dikinase] + AMP + H(+). The enzyme catalyses N(tele)-phospho-L-histidyl/O-phospho-L-threonyl-[pyruvate, phosphate dikinase] + phosphate + H(+) = N(tele)-phospho-L-histidyl/L-threonyl-[pyruvate, phosphate dikinase] + diphosphate. In terms of biological role, bifunctional serine/threonine kinase and phosphorylase involved in the regulation of the pyruvate, phosphate dikinase (PPDK) by catalyzing its phosphorylation/dephosphorylation. This Clostridium beijerinckii (strain ATCC 51743 / NCIMB 8052) (Clostridium acetobutylicum) protein is Putative pyruvate, phosphate dikinase regulatory protein.